The sequence spans 478 residues: Argininosuccinate synthase (478 aa).

ATP-binding positions include 17–25 and Ala-43; that span reads AFSGGLDTS. An L-citrulline-binding site is contributed by Tyr-99. ATP is bound by residues Gly-129 and Thr-131. The L-aspartate site is built by Thr-131, Asn-135, and Asp-136. Asn-135 is an L-citrulline binding site. Asp-136 is a binding site for ATP. 2 residues coordinate L-citrulline: Arg-139 and Ser-192. Asp-194 contacts ATP. L-citrulline contacts are provided by Thr-201, Glu-203, and Glu-280.

Belongs to the argininosuccinate synthase family. Type 2 subfamily. As to quaternary structure, homotetramer.

It is found in the cytoplasm. It carries out the reaction L-citrulline + L-aspartate + ATP = 2-(N(omega)-L-arginino)succinate + AMP + diphosphate + H(+). It functions in the pathway amino-acid biosynthesis; L-arginine biosynthesis; L-arginine from L-ornithine and carbamoyl phosphate: step 2/3. The chain is Argininosuccinate synthase from Leifsonia xyli subsp. xyli (strain CTCB07).